Reading from the N-terminus, the 185-residue chain is MINEIKKDAQARMQKSLESLSHAFGQIRTGKAHPSILGSVMVPYYGSDTPISSVANITVKDSRTLQVVAFERNMLGAVDKAIQSAGLNLNPTNLGELLLISMPALTEETRKGFTKQARSAAEDARVAVRNIRRDALGDLKKLVKDKEISEDEERRATADIDKLTKDAEAQITKATEEKEKDLMAV.

Belongs to the RRF family.

The protein localises to the cytoplasm. In terms of biological role, responsible for the release of ribosomes from messenger RNA at the termination of protein biosynthesis. May increase the efficiency of translation by recycling ribosomes from one round of translation to another. The protein is Ribosome-recycling factor of Pseudomonas fluorescens (strain SBW25).